A 1102-amino-acid polypeptide reads, in one-letter code: DNA-directed RNA polymerase subunit beta (1102 aa).

The interval 1076–1102 is disordered; the sequence is IDSQRRAPNRPTYESLHTEEDLEEEEV.

This sequence belongs to the RNA polymerase beta chain family. In terms of assembly, in cyanobacteria the RNAP catalytic core is composed of 2 alpha, 1 beta, 1 beta', 1 gamma and 1 omega subunit. When a sigma factor is associated with the core the holoenzyme is formed, which can initiate transcription.

It carries out the reaction RNA(n) + a ribonucleoside 5'-triphosphate = RNA(n+1) + diphosphate. In terms of biological role, DNA-dependent RNA polymerase catalyzes the transcription of DNA into RNA using the four ribonucleoside triphosphates as substrates. The chain is DNA-directed RNA polymerase subunit beta from Synechocystis sp. (strain ATCC 27184 / PCC 6803 / Kazusa).